The primary structure comprises 361 residues: Biotin synthase (361 aa).

The region spanning 83-308 (PEVEVEGIIS…RTILRYAGGR (226 aa)) is the Radical SAM core domain. [4Fe-4S] cluster-binding residues include C98, C102, and C105. C141, C174, C233, and R303 together coordinate [2Fe-2S] cluster.

It belongs to the radical SAM superfamily. Biotin synthase family. Homodimer. The cofactor is [4Fe-4S] cluster. [2Fe-2S] cluster serves as cofactor.

It carries out the reaction (4R,5S)-dethiobiotin + (sulfur carrier)-SH + 2 reduced [2Fe-2S]-[ferredoxin] + 2 S-adenosyl-L-methionine = (sulfur carrier)-H + biotin + 2 5'-deoxyadenosine + 2 L-methionine + 2 oxidized [2Fe-2S]-[ferredoxin]. Its pathway is cofactor biosynthesis; biotin biosynthesis; biotin from 7,8-diaminononanoate: step 2/2. Catalyzes the conversion of dethiobiotin (DTB) to biotin by the insertion of a sulfur atom into dethiobiotin via a radical-based mechanism. In Parafrankia sp. (strain EAN1pec), this protein is Biotin synthase.